The chain runs to 619 residues: Grainyhead-like protein 2 homolog (619 aa).

Positions 1–90 (MSQETDNKRL…KINEGHEDQD (90 aa)) are transcription activation. 3 disordered regions span residues 86–108 (HEDQ…STGE), 125–147 (NDTV…PQPA), and 423–444 (EERK…CNNS). The span at 99–108 (ETPSNLSTGE) shows a compositional bias: polar residues. The 239-residue stretch at 239–477 (ASSTFQYTLE…DLDVQPVLFI (239 aa)) folds into the Grh/CP2 DB domain.

The protein belongs to the grh/CP2 family. Grainyhead subfamily.

The protein resides in the nucleus. Its subcellular location is the membrane. Its function is as follows. Transcription factor playing an important role in primary neurulation and in epithelial development. Binds directly to the consensus DNA sequence 5'-AACCGGTT-3' acting as an activator and repressor on distinct target genes. This is Grainyhead-like protein 2 homolog (grhl2) from Xenopus tropicalis (Western clawed frog).